Consider the following 194-residue polypeptide: A-type ATP synthase subunit E (194 aa).

Belongs to the V-ATPase E subunit family. In terms of assembly, has multiple subunits with at least A(3), B(3), C, D, E, F, H, I and proteolipid K(x).

The protein localises to the cell membrane. Functionally, component of the A-type ATP synthase that produces ATP from ADP in the presence of a proton gradient across the membrane. The sequence is that of A-type ATP synthase subunit E from Haloferax volcanii (strain ATCC 29605 / DSM 3757 / JCM 8879 / NBRC 14742 / NCIMB 2012 / VKM B-1768 / DS2) (Halobacterium volcanii).